The chain runs to 381 residues: Protein COS1 (381 aa).

Residues 1–42 (MKENELKNEKSVDVLSFKQLESQKIVLPQDLFRSSFTWFCYE) lie on the Cytoplasmic side of the membrane. The helical transmembrane segment at 43-63 (IYKSLAFRIWMLLWLPLSVWW) threads the bilayer. Residues 64 to 72 (KLSNNCIYP) lie on the Extracellular side of the membrane. Residues 73–93 (LIVSLLVLFLGPIFVLVICGL) form a helical membrane-spanning segment. Over 94-231 (SRKRSLSKQL…YRFKLTWFLK (138 aa)) the chain is Cytoplasmic. A helical transmembrane segment spans residues 232-252 (RISNIFMLIPFLNFLCCIYVS). The Extracellular portion of the chain corresponds to 253-254 (RG). The helical transmembrane segment at 255–275 (MCLLLRTFYLGWILFMLVQGF) threads the bilayer. The Cytoplasmic segment spans residues 276 to 381 (QNMRMIVLSV…QLSCSEESLA (106 aa)).

Belongs to the DUP/COS family.

The protein localises to the membrane. The chain is Protein COS1 (COS1) from Saccharomyces cerevisiae (strain ATCC 204508 / S288c) (Baker's yeast).